The following is a 750-amino-acid chain: Catalase-peroxidase 1 (750 aa).

The tryptophyl-tyrosyl-methioninium (Trp-Tyr) (with M-264) cross-link spans 90–238; the sequence is WHSAGTYRVM…VSAAHMGLIY (149 aa). H91 functions as the Proton acceptor in the catalytic mechanism. Residues 199-218 are disordered; it reads NEGHKESGVIDGSESKKGHK. Over residues 200-218 the composition is skewed to basic and acidic residues; sequence EGHKESGVIDGSESKKGHK. The segment at residues 238-264 is a cross-link (tryptophyl-tyrosyl-methioninium (Tyr-Met) (with W-90)); sequence YVNPEGPDGIPDPVAAARDIRTTFSRM. H279 lines the heme b pocket.

It belongs to the peroxidase family. Peroxidase/catalase subfamily. Homodimer or homotetramer. Predominantly homodimeric. The cofactor is heme b. Post-translationally, formation of the three residue Trp-Tyr-Met cross-link is important for the catalase, but not the peroxidase activity of the enzyme.

Its subcellular location is the cytoplasm. The catalysed reaction is H2O2 + AH2 = A + 2 H2O. The enzyme catalyses 2 H2O2 = O2 + 2 H2O. Functionally, bifunctional enzyme with both catalase and broad-spectrum peroxidase activity. This Pyricularia oryzae (strain 70-15 / ATCC MYA-4617 / FGSC 8958) (Rice blast fungus) protein is Catalase-peroxidase 1.